The sequence spans 253 residues: Phosphate import ATP-binding protein PstB (253 aa).

Residues 7-248 (MHSKGLDFFY…PGNKQTEDYI (242 aa)) enclose the ABC transporter domain. 39–46 (GPSGCGKS) lines the ATP pocket.

The protein belongs to the ABC transporter superfamily. Phosphate importer (TC 3.A.1.7) family. In terms of assembly, the complex is composed of two ATP-binding proteins (PstB), two transmembrane proteins (PstC and PstA) and a solute-binding protein (PstS).

The protein resides in the cell inner membrane. The catalysed reaction is phosphate(out) + ATP + H2O = ADP + 2 phosphate(in) + H(+). In terms of biological role, part of the ABC transporter complex PstSACB involved in phosphate import. Responsible for energy coupling to the transport system. This is Phosphate import ATP-binding protein PstB from Oleidesulfovibrio alaskensis (strain ATCC BAA-1058 / DSM 17464 / G20) (Desulfovibrio alaskensis).